The chain runs to 215 residues: UPF0502 protein CKO_01995 (215 aa).

This sequence belongs to the UPF0502 family.

The polypeptide is UPF0502 protein CKO_01995 (Citrobacter koseri (strain ATCC BAA-895 / CDC 4225-83 / SGSC4696)).